We begin with the raw amino-acid sequence, 262 residues long: Acyl-[acyl-carrier-protein]--UDP-N-acetylglucosamine O-acyltransferase (262 aa).

Belongs to the transferase hexapeptide repeat family. LpxA subfamily. In terms of assembly, homotrimer.

Its subcellular location is the cytoplasm. The catalysed reaction is a (3R)-hydroxyacyl-[ACP] + UDP-N-acetyl-alpha-D-glucosamine = a UDP-3-O-[(3R)-3-hydroxyacyl]-N-acetyl-alpha-D-glucosamine + holo-[ACP]. Its pathway is glycolipid biosynthesis; lipid IV(A) biosynthesis; lipid IV(A) from (3R)-3-hydroxytetradecanoyl-[acyl-carrier-protein] and UDP-N-acetyl-alpha-D-glucosamine: step 1/6. Functionally, involved in the biosynthesis of lipid A, a phosphorylated glycolipid that anchors the lipopolysaccharide to the outer membrane of the cell. In Salmonella heidelberg (strain SL476), this protein is Acyl-[acyl-carrier-protein]--UDP-N-acetylglucosamine O-acyltransferase.